Reading from the N-terminus, the 395-residue chain is Acetate kinase (395 aa).

Mg(2+) is bound at residue Asn-8. Lys-15 contacts ATP. Arg-89 is a binding site for substrate. The active-site Proton donor/acceptor is the Asp-146. ATP-binding positions include 206-210, 281-283, and 329-333; these read HLGNG, DLR, and GIGEN. Glu-382 lines the Mg(2+) pocket.

The protein belongs to the acetokinase family. Homodimer. Mg(2+) is required as a cofactor. Requires Mn(2+) as cofactor.

It is found in the cytoplasm. It catalyses the reaction acetate + ATP = acetyl phosphate + ADP. It functions in the pathway metabolic intermediate biosynthesis; acetyl-CoA biosynthesis; acetyl-CoA from acetate: step 1/2. Functionally, catalyzes the formation of acetyl phosphate from acetate and ATP. Can also catalyze the reverse reaction. This is Acetate kinase from Shouchella clausii (strain KSM-K16) (Alkalihalobacillus clausii).